A 203-amino-acid polypeptide reads, in one-letter code: Large ribosomal subunit protein uL18 (203 aa).

Belongs to the universal ribosomal protein uL18 family. In terms of assembly, part of the 50S ribosomal subunit. Contacts the 5S and 23S rRNAs.

In terms of biological role, this is one of the proteins that bind and probably mediate the attachment of the 5S RNA into the large ribosomal subunit, where it forms part of the central protuberance. This Pyrococcus abyssi (strain GE5 / Orsay) protein is Large ribosomal subunit protein uL18.